Here is a 300-residue protein sequence, read N- to C-terminus: Ribosomal protein L11 methyltransferase (300 aa).

4 residues coordinate S-adenosyl-L-methionine: Thr152, Gly173, Asp195, and Asn234.

This sequence belongs to the methyltransferase superfamily. PrmA family.

It is found in the cytoplasm. The enzyme catalyses L-lysyl-[protein] + 3 S-adenosyl-L-methionine = N(6),N(6),N(6)-trimethyl-L-lysyl-[protein] + 3 S-adenosyl-L-homocysteine + 3 H(+). Its function is as follows. Methylates ribosomal protein L11. In Burkholderia ambifaria (strain ATCC BAA-244 / DSM 16087 / CCUG 44356 / LMG 19182 / AMMD) (Burkholderia cepacia (strain AMMD)), this protein is Ribosomal protein L11 methyltransferase.